The following is a 767-amino-acid chain: 5-methyltetrahydropteroyltriglutamate--homocysteine methyltransferase (767 aa).

5-methyltetrahydropteroyltri-L-glutamate-binding positions include 17–20 (RELK) and lysine 117. L-homocysteine contacts are provided by residues 442 to 444 (IGS) and glutamate 495. Residues 442–444 (IGS) and glutamate 495 contribute to the L-methionine site. 5-methyltetrahydropteroyltri-L-glutamate contacts are provided by residues 526-527 (RC) and tryptophan 572. Aspartate 610 contacts L-homocysteine. An L-methionine-binding site is contributed by aspartate 610. Position 616 (glutamate 616) interacts with 5-methyltetrahydropteroyltri-L-glutamate. Zn(2+) is bound by residues histidine 653, cysteine 655, and glutamate 677. The active-site Proton donor is histidine 706. Residue cysteine 738 participates in Zn(2+) binding.

Belongs to the vitamin-B12 independent methionine synthase family. Zn(2+) serves as cofactor.

It catalyses the reaction 5-methyltetrahydropteroyltri-L-glutamate + L-homocysteine = tetrahydropteroyltri-L-glutamate + L-methionine. It functions in the pathway amino-acid biosynthesis; L-methionine biosynthesis via de novo pathway; L-methionine from L-homocysteine (MetE route): step 1/1. Catalyzes the transfer of a methyl group from 5-methyltetrahydrofolate to homocysteine resulting in methionine formation. The sequence is that of 5-methyltetrahydropteroyltriglutamate--homocysteine methyltransferase from Bifidobacterium animalis subsp. lactis (strain AD011).